A 433-amino-acid chain; its full sequence is D-amino acid dehydrogenase (433 aa).

Residue 3 to 17 participates in FAD binding; sequence VLVLGSGVIGTTSAY.

The protein belongs to the DadA oxidoreductase family. FAD serves as cofactor.

It catalyses the reaction a D-alpha-amino acid + A + H2O = a 2-oxocarboxylate + AH2 + NH4(+). In terms of biological role, oxidative deamination of D-amino acids. The chain is D-amino acid dehydrogenase from Pseudomonas syringae pv. tomato (strain ATCC BAA-871 / DC3000).